The chain runs to 165 residues: Urease accessory protein UreE (165 aa).

It belongs to the UreE family.

It localises to the cytoplasm. Involved in urease metallocenter assembly. Binds nickel. Probably functions as a nickel donor during metallocenter assembly. The sequence is that of Urease accessory protein UreE from Flavobacterium johnsoniae (strain ATCC 17061 / DSM 2064 / JCM 8514 / BCRC 14874 / CCUG 350202 / NBRC 14942 / NCIMB 11054 / UW101) (Cytophaga johnsonae).